We begin with the raw amino-acid sequence, 630 residues long: Chaperone protein HtpG (630 aa).

Positions 1–336 (MTTTVEQTAE…TADLPLNVSR (336 aa)) are a; substrate-binding. A b region spans residues 337–551 (EMIQESPILA…EDGYDRQMEK (215 aa)). The tract at residues 552-630 (ILQNAGRLQG…VFERSVRSEG (79 aa)) is c.

It belongs to the heat shock protein 90 family. In terms of assembly, homodimer.

It localises to the cytoplasm. Molecular chaperone. Has ATPase activity. The protein is Chaperone protein HtpG of Rhizobium etli (strain ATCC 51251 / DSM 11541 / JCM 21823 / NBRC 15573 / CFN 42).